The sequence spans 397 residues: Histidinol-phosphate aminotransferase (397 aa).

K247 is modified (N6-(pyridoxal phosphate)lysine).

It belongs to the class-II pyridoxal-phosphate-dependent aminotransferase family. Histidinol-phosphate aminotransferase subfamily. Homodimer. The cofactor is pyridoxal 5'-phosphate.

The catalysed reaction is L-histidinol phosphate + 2-oxoglutarate = 3-(imidazol-4-yl)-2-oxopropyl phosphate + L-glutamate. The protein operates within amino-acid biosynthesis; L-histidine biosynthesis; L-histidine from 5-phospho-alpha-D-ribose 1-diphosphate: step 7/9. The chain is Histidinol-phosphate aminotransferase from Frankia casuarinae (strain DSM 45818 / CECT 9043 / HFP020203 / CcI3).